Here is a 124-residue protein sequence, read N- to C-terminus: Small ribosomal subunit protein uS12 (124 aa).

The tract at residues 1–26 (MPTISQLVGSERKRLTKKTKSPALKA) is disordered. D89 carries the post-translational modification 3-methylthioaspartic acid. The segment at 104 to 124 (TAGVKDRRQSRSKYGAKAPKD) is disordered.

Belongs to the universal ribosomal protein uS12 family. Part of the 30S ribosomal subunit. Contacts proteins S8 and S17. May interact with IF1 in the 30S initiation complex.

With S4 and S5 plays an important role in translational accuracy. In terms of biological role, interacts with and stabilizes bases of the 16S rRNA that are involved in tRNA selection in the A site and with the mRNA backbone. Located at the interface of the 30S and 50S subunits, it traverses the body of the 30S subunit contacting proteins on the other side and probably holding the rRNA structure together. The combined cluster of proteins S8, S12 and S17 appears to hold together the shoulder and platform of the 30S subunit. The polypeptide is Small ribosomal subunit protein uS12 (Prochlorococcus marinus (strain MIT 9215)).